Reading from the N-terminus, the 230-residue chain is 2,3-bisphosphoglycerate-dependent phosphoglycerate mutase (230 aa).

Substrate is bound by residues 8 to 15 (RHGESEWN), 21 to 22 (TG), Arg-60, 87 to 90 (ERHY), Lys-98, 114 to 115 (RR), and 183 to 184 (GN). Catalysis depends on His-9, which acts as the Tele-phosphohistidine intermediate. Glu-87 acts as the Proton donor/acceptor in catalysis.

The protein belongs to the phosphoglycerate mutase family. BPG-dependent PGAM subfamily.

The enzyme catalyses (2R)-2-phosphoglycerate = (2R)-3-phosphoglycerate. It participates in carbohydrate degradation; glycolysis; pyruvate from D-glyceraldehyde 3-phosphate: step 3/5. Its function is as follows. Catalyzes the interconversion of 2-phosphoglycerate and 3-phosphoglycerate. The polypeptide is 2,3-bisphosphoglycerate-dependent phosphoglycerate mutase (Streptococcus sanguinis (strain SK36)).